The following is a 415-amino-acid chain: Very late expression factor 1 (415 aa).

The Tyr recombinase domain occupies 171–357 (REIINTILDC…DESDDNDEDD (187 aa)). Residues R214, K242, R307, and H330 contribute to the active site. Residues 339–415 (YLNKYDVGVD…GDDADLLSFN (77 aa)) form a disordered region. The O-(3'-phospho-DNA)-tyrosine intermediate role is filled by Y343. The span at 346-363 (GVDESDDNDEDDDDDEND) shows a compositional bias: acidic residues. Positions 375 to 404 (NISNYDINNSSSGNSSSNNTSGNDFNNNIS) are enriched in low complexity.

Belongs to the 'phage' integrase family.

Functionally, involved in very late gene activation. The polypeptide is Very late expression factor 1 (VLF-1) (Heliothis zea nuclear polyhedrosis virus (HzSNPV)).